A 619-amino-acid chain; its full sequence is MAEYGKDYEVIVVGAGHAGCEAALASARMGCNTLLLNLHLDAVAQMSCNPAIGGLAKGHLVREIDALGGEMARVIDATGIQFRTLNTKKGPAVRATRAQADRRAYQFHMKQVVENQPALDLKQGSVSRLILQGDKVSGVETTDGLRFFGQTVVLTTGTFMRGLIHVGLQHFPGGRAGEPPSLGLSDHLAELGLRVGRLKTGTPARLDGNTIDYDRLVPQHGDVPPKPFSADTEKITSPQVPCFITATNAHTHDIIRQGLDRSPLYQGVIEGVGPRYCPSIEDKIMRFPDKDSHHVFLEPEGLGTREVYPNGVSTSLPPDVQLAFLRTIPGLEHVEIMRPGYAIEYDFVDPIQLKPSLETKKIRNLFLAGQINGTSGYEEAAAQGLMAGINAVHALRDCPPVVLGRDQAYIGVMIDDLVTCGTSEPYRMFTSRAEYRLLLREDNADQRLTPLGHQVGLVSDERWQRFTRKMDKIVEGRDFLEKRRLSSSDKEAIGRLGLEDLKNGLSLVQILRRPDINIEDLVFCDDRLADIPENVREQLQIEIKYEGYIARQYEMVERFRRSEQIAIPSDMDYSPIEGLSIEVREKLQKVRPQNLGQAARIPGVTPAAVAILSVLLRRN.

Residues 14–19 (GAGHAG), Val126, and Ser181 contribute to the FAD site. Residue 273 to 287 (GPRYCPSIEDKIMRF) coordinates NAD(+). FAD is bound at residue Gln370.

It belongs to the MnmG family. In terms of assembly, homodimer. Heterotetramer of two MnmE and two MnmG subunits. Requires FAD as cofactor.

It localises to the cytoplasm. In terms of biological role, NAD-binding protein involved in the addition of a carboxymethylaminomethyl (cmnm) group at the wobble position (U34) of certain tRNAs, forming tRNA-cmnm(5)s(2)U34. This is tRNA uridine 5-carboxymethylaminomethyl modification enzyme MnmG from Syntrophotalea carbinolica (strain DSM 2380 / NBRC 103641 / GraBd1) (Pelobacter carbinolicus).